The sequence spans 493 residues: Rop guanine nucleotide exchange factor 10 (493 aa).

Disordered stretches follow at residues 1–45 (MFDG…RSDM) and 400–423 (GEAE…VVAA). The segment covering 17–27 (DGMHTPEHELA) has biased composition (basic and acidic residues). The PRONE domain occupies 35 to 401 (RRGKQNRRSD…RLVQRQLMGE (367 aa)).

Guanine-nucleotide exchange factor (GEF) that acts as an activator of Rop (Rho of plants) GTPases by promoting the exchange of GDP for GTP. The chain is Rop guanine nucleotide exchange factor 10 (ROPGEF10) from Arabidopsis thaliana (Mouse-ear cress).